The following is a 481-amino-acid chain: RuvB-like helicase 2 (481 aa).

76–83 (GPPSTGKT) serves as a coordination point for ATP.

Belongs to the RuvB family. As to quaternary structure, may form heterododecamers with hel-1/rvb1. Component of the SWR1 chromatin remodeling complex, the INO80 chromatin remodeling complex, and of the R2TP complex.

The protein localises to the nucleus. It carries out the reaction ATP + H2O = ADP + phosphate + H(+). Functionally, DNA helicase which participates in several chromatin remodeling complexes, including the SWR1 and the INO80 complexes. The SWR1 complex mediates the ATP-dependent exchange of histone H2A for the H2A variant H2A.Z leading to transcriptional regulation of selected genes by chromatin remodeling. The INO80 complex remodels chromatin by shifting nucleosomes and is involved in DNA repair. Also involved in pre-rRNA processing. The sequence is that of RuvB-like helicase 2 (hel-2) from Neurospora crassa (strain ATCC 24698 / 74-OR23-1A / CBS 708.71 / DSM 1257 / FGSC 987).